Here is a 212-residue protein sequence, read N- to C-terminus: Ribosomal RNA small subunit methyltransferase G (212 aa).

S-adenosyl-L-methionine is bound by residues glycine 73, phenylalanine 78, isoleucine 124–glutamate 125, and arginine 137.

Belongs to the methyltransferase superfamily. RNA methyltransferase RsmG family.

It localises to the cytoplasm. Specifically methylates the N7 position of a guanine in 16S rRNA. This Karelsulcia muelleri (strain GWSS) (Sulcia muelleri) protein is Ribosomal RNA small subunit methyltransferase G.